The sequence spans 401 residues: Argininosuccinate synthase (401 aa).

Residues 10-18 (AYSGGVDTS) and alanine 38 each bind ATP. Tyrosine 89 contacts L-citrulline. Residue glycine 119 coordinates ATP. Threonine 121, asparagine 125, and aspartate 126 together coordinate L-aspartate. Asparagine 125 lines the L-citrulline pocket. Residues arginine 129, serine 177, serine 186, glutamate 262, and tyrosine 274 each contribute to the L-citrulline site.

It belongs to the argininosuccinate synthase family. Type 1 subfamily. Homotetramer.

It is found in the cytoplasm. It catalyses the reaction L-citrulline + L-aspartate + ATP = 2-(N(omega)-L-arginino)succinate + AMP + diphosphate + H(+). It functions in the pathway amino-acid biosynthesis; L-arginine biosynthesis; L-arginine from L-ornithine and carbamoyl phosphate: step 2/3. The polypeptide is Argininosuccinate synthase (Synechococcus sp. (strain CC9311)).